Here is a 243-residue protein sequence, read N- to C-terminus: Leucyl/phenylalanyl-tRNA--protein transferase (243 aa).

It belongs to the L/F-transferase family.

Its subcellular location is the cytoplasm. It catalyses the reaction N-terminal L-lysyl-[protein] + L-leucyl-tRNA(Leu) = N-terminal L-leucyl-L-lysyl-[protein] + tRNA(Leu) + H(+). The catalysed reaction is N-terminal L-arginyl-[protein] + L-leucyl-tRNA(Leu) = N-terminal L-leucyl-L-arginyl-[protein] + tRNA(Leu) + H(+). It carries out the reaction L-phenylalanyl-tRNA(Phe) + an N-terminal L-alpha-aminoacyl-[protein] = an N-terminal L-phenylalanyl-L-alpha-aminoacyl-[protein] + tRNA(Phe). Its function is as follows. Functions in the N-end rule pathway of protein degradation where it conjugates Leu, Phe and, less efficiently, Met from aminoacyl-tRNAs to the N-termini of proteins containing an N-terminal arginine or lysine. The chain is Leucyl/phenylalanyl-tRNA--protein transferase from Xylella fastidiosa (strain 9a5c).